The chain runs to 184 residues: Thymidine kinase (184 aa).

Residues 10 to 17 (GPMYSGKT), His-53, and 83 to 86 (DEVQ) contribute to the ATP site. The Proton acceptor role is filled by Glu-84. Substrate is bound at residue His-115. Residues Cys-140 and Cys-143 each coordinate Zn(2+). Substrate contacts are provided by residues 161-164 (IDVG) and Tyr-169. Zn(2+) is bound by residues Cys-173 and Cys-176.

This sequence belongs to the thymidine kinase family. As to quaternary structure, homotetramer.

It is found in the cytoplasm. It carries out the reaction thymidine + ATP = dTMP + ADP + H(+). The sequence is that of Thymidine kinase (tdk) from Thermotoga maritima (strain ATCC 43589 / DSM 3109 / JCM 10099 / NBRC 100826 / MSB8).